The following is a 982-amino-acid chain: MEAPALEQRQSLHDSSERQQRFTSLILPNGVGCSSREEPQGSGGLLVPHNDNDIDNDLASTRTASPTTTDFSSSSSDDNSTTLETSVNYSHSSNTNTNTSCPPSPITSSSLKPAYPLPPPSTRLTTILPTDLKTPDHLIRDPRLIRLTGSHPFNVEPPLTALFEHGFLTPQNLHYVRNHGPIPSSVATPPATINKEEDDSLLNWEFTVEGLVEHPLKISVRELMDASKWDNVTYPVTLVCAGNRRKEQNVLRKSKGFSWGAGGLSTALWTGVGLSEILARAKPLTKKGGGARYVCFEGADQLPNGTYGTSVKLAWAMDPNKGIMVAHKMNGENLHPDHGRPVRVVVPGQIGGRSVKWLKRIVVTKGPSENWYHVFDNRVLPTTVGPEESGEKTEEMERVWRDERYAIYDLNVNSVICEPGHGEVVSLRGDEGAGTYRLRGYAYAGGGRRVTRLEVTLDQGKSWRLAGIEYPEDRYREAQDGEELFGGRLDVSWRESCFCWCFWDLEIPLSELRKAKDVCIRAMDESLALQPKEMYWSVLGMMNNPWFRVVIHHEGDTLRFEHPTQPMLTSDGWMDRVKKEGGNLANGFWGEKVPGAEENVVKEEPVKEISMVDEKVTRLITLEELRQHDGEEEPWFVVNGQVYNGTPFLEGHPGGAASITGAAGQDVTDEFLAIHSENAKAMMPTYHIGTLTPSAPAALKSSSTSDPALSDPSRPIFLQSKTWNSAILTFKESVSPDTKIFHFALSHPAQSIGLPVGQHLMMRLPDPAKPTESIIRAYTPISDGTLERGTLRVLVKIYYASPTEDIKGGQMTQALDALALGKAVEFKGPVGKFVYQGRGVCSVNGRERKVKRFVMVCGGSGVTPIYQVAEAVAVDDQDGTECLVLDGNRVEGDILMKSELDELVERAKPMGRCRVKYTLSRPGAEWEGLRGRLDKTMLEREVGEGDLRGETMVLLCGPEGMQNMVREVLKGMGWKDEDVLVF.

Positions 1–128 (MEAPALEQRQ…PPSTRLTTIL (128 aa)) are disordered. Residues 10–20 (QSLHDSSERQQ) show a composition bias toward basic and acidic residues. The segment covering 63–110 (TASPTTTDFSSSSSDDNSTTLETSVNYSHSSNTNTNTSCPPSPITSSS) has biased composition (low complexity). C240 provides a ligand contact to Mo-molybdopterin. Residues 617–692 (TRLITLEELR…MPTYHIGTLT (76 aa)) form the Cytochrome b5 heme-binding domain. H652 and H675 together coordinate heme. The 116-residue stretch at 721–836 (KTWNSAILTF…KGPVGKFVYQ (116 aa)) folds into the FAD-binding FR-type domain. FAD contacts are provided by residues 776-779 (RAYT), 794-798 (LVKIY), 810-812 (QMT), S860, and T863. 952–961 (MVLLCGPEGM) serves as a coordination point for NADP(+).

It belongs to the nitrate reductase family. In terms of assembly, homodimer. It depends on FAD as a cofactor. Requires heme as cofactor. Mo-molybdopterin is required as a cofactor.

The enzyme catalyses nitrite + NADP(+) + H2O = nitrate + NADPH + H(+). The protein operates within nitrogen metabolism; nitrate reduction (assimilation). Its function is as follows. Nitrate reductase is a key enzyme involved in the first step of nitrate assimilation in plants, fungi and bacteria. The chain is Nitrate reductase [NADPH] (nit-3) from Neurospora crassa (strain ATCC 24698 / 74-OR23-1A / CBS 708.71 / DSM 1257 / FGSC 987).